Here is a 175-residue protein sequence, read N- to C-terminus: Protein SELF-PRUNING (175 aa).

This sequence belongs to the phosphatidylethanolamine-binding protein family.

It localises to the cytoplasm. Its function is as follows. Not known. In plants homozygous for the recessive allele of the SP gene, sympodial segments develop progressively fewer nodes until the shoot is terminated by two consecutive. inflorescences. The polypeptide is Protein SELF-PRUNING (SP) (Solanum lycopersicum (Tomato)).